A 235-amino-acid polypeptide reads, in one-letter code: UPF0714 protein YmaC (235 aa).

Residues 5–24 (LLNVILVLAIVLFLRYVHYS) form a helical membrane-spanning segment.

Belongs to the UPF0714 family.

It localises to the cell membrane. In Bacillus subtilis (strain 168), this protein is UPF0714 protein YmaC (ymaC).